Reading from the N-terminus, the 396-residue chain is Tryptophan synthase beta chain (396 aa).

Position 88 is an N6-(pyridoxal phosphate)lysine (lysine 88).

It belongs to the TrpB family. In terms of assembly, tetramer of two alpha and two beta chains. Pyridoxal 5'-phosphate is required as a cofactor.

The catalysed reaction is (1S,2R)-1-C-(indol-3-yl)glycerol 3-phosphate + L-serine = D-glyceraldehyde 3-phosphate + L-tryptophan + H2O. The protein operates within amino-acid biosynthesis; L-tryptophan biosynthesis; L-tryptophan from chorismate: step 5/5. Functionally, the beta subunit is responsible for the synthesis of L-tryptophan from indole and L-serine. The polypeptide is Tryptophan synthase beta chain (Actinobacillus pleuropneumoniae serotype 7 (strain AP76)).